A 458-amino-acid chain; its full sequence is Opine oxidase subunit A (458 aa).

It to T-protein and to dimethylglycine dehydrogenase. In terms of assembly, heterodimer of a subunit A and a subunit B.

The protein operates within opine metabolism; octopine degradation. In terms of biological role, oxidative cleavage of octopine into L-arginine and pyruvate. The protein is Opine oxidase subunit A (ooxA) of Rhizobium meliloti (strain 1021) (Ensifer meliloti).